We begin with the raw amino-acid sequence, 281 residues long: Undecaprenyl-diphosphatase 1 (281 aa).

6 helical membrane-spanning segments follow: residues 95–115 (WMVI…KDLI), 119–139 (FRNL…FILA), 152–172 (LTMK…IPGV), 195–215 (FSFL…LPDA), 227–247 (LQLL…IAWL), and 256–276 (FAWF…LLGT).

This sequence belongs to the UppP family.

It localises to the cell membrane. The enzyme catalyses di-trans,octa-cis-undecaprenyl diphosphate + H2O = di-trans,octa-cis-undecaprenyl phosphate + phosphate + H(+). Catalyzes the dephosphorylation of undecaprenyl diphosphate (UPP). Confers resistance to bacitracin. The protein is Undecaprenyl-diphosphatase 1 of Corynebacterium jeikeium (strain K411).